The following is a 96-amino-acid chain: Co-chaperonin GroES (96 aa).

The protein belongs to the GroES chaperonin family. In terms of assembly, heptamer of 7 subunits arranged in a ring. Interacts with the chaperonin GroEL.

The protein localises to the cytoplasm. Functionally, together with the chaperonin GroEL, plays an essential role in assisting protein folding. The GroEL-GroES system forms a nano-cage that allows encapsulation of the non-native substrate proteins and provides a physical environment optimized to promote and accelerate protein folding. GroES binds to the apical surface of the GroEL ring, thereby capping the opening of the GroEL channel. The chain is Co-chaperonin GroES from Hydrogenobaculum sp. (strain Y04AAS1).